The primary structure comprises 214 residues: Probable transaldolase (214 aa).

The active-site Schiff-base intermediate with substrate is the K83.

The protein belongs to the transaldolase family. Type 3B subfamily.

The protein localises to the cytoplasm. It carries out the reaction D-sedoheptulose 7-phosphate + D-glyceraldehyde 3-phosphate = D-erythrose 4-phosphate + beta-D-fructose 6-phosphate. Its pathway is carbohydrate degradation; pentose phosphate pathway; D-glyceraldehyde 3-phosphate and beta-D-fructose 6-phosphate from D-ribose 5-phosphate and D-xylulose 5-phosphate (non-oxidative stage): step 2/3. Its function is as follows. Transaldolase is important for the balance of metabolites in the pentose-phosphate pathway. The sequence is that of Probable transaldolase from Geobacter metallireducens (strain ATCC 53774 / DSM 7210 / GS-15).